The sequence spans 943 residues: Protein translocase subunit SecA (943 aa).

ATP-binding positions include Q90, 108 to 112 (GEGKT), and D509. The disordered stretch occupies residues 534–561 (KPDNEHKPPIPQQRNSKSGGGFSANVDS).

This sequence belongs to the SecA family. As to quaternary structure, monomer and homodimer. Part of the essential Sec protein translocation apparatus which comprises SecA, SecYEG and auxiliary proteins SecDF. Other proteins may also be involved.

The protein localises to the cell inner membrane. The protein resides in the cellular thylakoid membrane. It localises to the cytoplasm. It catalyses the reaction ATP + H2O + cellular proteinSide 1 = ADP + phosphate + cellular proteinSide 2.. In terms of biological role, part of the Sec protein translocase complex. Interacts with the SecYEG preprotein conducting channel. Has a central role in coupling the hydrolysis of ATP to the transfer of proteins into and across the cell membrane, serving as an ATP-driven molecular motor driving the stepwise translocation of polypeptide chains across the membrane. Probably participates in protein translocation into and across both the cytoplasmic and thylakoid membranes in cyanobacterial cells. The chain is Protein translocase subunit SecA from Prochlorococcus marinus subsp. pastoris (strain CCMP1986 / NIES-2087 / MED4).